The chain runs to 354 residues: Ferrochelatase (354 aa).

Positions 214 and 295 each coordinate Fe cation.

Belongs to the ferrochelatase family.

Its subcellular location is the cytoplasm. It carries out the reaction heme b + 2 H(+) = protoporphyrin IX + Fe(2+). It functions in the pathway porphyrin-containing compound metabolism; protoheme biosynthesis; protoheme from protoporphyrin-IX: step 1/1. In terms of biological role, catalyzes the ferrous insertion into protoporphyrin IX. The sequence is that of Ferrochelatase from Burkholderia ambifaria (strain MC40-6).